We begin with the raw amino-acid sequence, 62 residues long: Ubiquinol-cytochrome c reductase complex 6.7 kDa protein (62 aa).

Topologically, residues 2 to 25 (TSPAAAGNGLFKFLRPKLRPQSTD) are mitochondrial matrix. A helical transmembrane segment spans residues 26-44 (IQAAAGWGVAAVTGALWVI). Topologically, residues 45 to 62 (QPWDFLRKTFIEKQEEEK) are mitochondrial intermembrane.

This sequence belongs to the UQCR11/QCR10 family. In terms of assembly, component of the ubiquinol-cytochrome c oxidoreductase (cytochrome b-c1 complex, complex III, CIII), a multisubunit enzyme composed of 3 respiratory subunits cytochrome b, cytochrome c1 and Rieske protein, 2 core protein subunits, and additional low-molecular weight protein subunits. The complex exists as an obligatory dimer and forms supercomplexes (SCs) in the inner mitochondrial membrane with cytochrome c oxidase (complex IV, CIV).

It localises to the mitochondrion inner membrane. In terms of biological role, component of the ubiquinol-cytochrome c oxidoreductase, a multisubunit transmembrane complex that is part of the mitochondrial electron transport chain which drives oxidative phosphorylation. The respiratory chain contains 3 multisubunit complexes succinate dehydrogenase (complex II, CII), ubiquinol-cytochrome c oxidoreductase (cytochrome b-c1 complex, complex III, CIII) and cytochrome c oxidase (complex IV, CIV), that cooperate to transfer electrons derived from NADH and succinate to molecular oxygen, creating an electrochemical gradient over the inner membrane that drives transmembrane transport and the ATP synthase. The cytochrome b-c1 complex catalyzes electron transfer from ubiquinol to cytochrome c, linking this redox reaction to translocation of protons across the mitochondrial inner membrane, with protons being carried across the membrane as hydrogens on the quinol. In the process called Q cycle, 2 protons are consumed from the matrix, 4 protons are released into the intermembrane space and 2 electrons are passed to cytochrome c. QCR10 has a role in CIII assembly and RIP1 stability. In Solanum tuberosum (Potato), this protein is Ubiquinol-cytochrome c reductase complex 6.7 kDa protein.